Here is a 425-residue protein sequence, read N- to C-terminus: Serine--tRNA ligase (425 aa).

232-234 is an L-serine binding site; that stretch reads TAE. Residues 263–265 and Val-279 contribute to the ATP site; that span reads RRE. Glu-286 contacts L-serine. 350–353 provides a ligand contact to ATP; sequence EVVS. Thr-387 provides a ligand contact to L-serine.

The protein belongs to the class-II aminoacyl-tRNA synthetase family. Type-1 seryl-tRNA synthetase subfamily. As to quaternary structure, homodimer. The tRNA molecule binds across the dimer.

It is found in the cytoplasm. It catalyses the reaction tRNA(Ser) + L-serine + ATP = L-seryl-tRNA(Ser) + AMP + diphosphate + H(+). The enzyme catalyses tRNA(Sec) + L-serine + ATP = L-seryl-tRNA(Sec) + AMP + diphosphate + H(+). Its pathway is aminoacyl-tRNA biosynthesis; selenocysteinyl-tRNA(Sec) biosynthesis; L-seryl-tRNA(Sec) from L-serine and tRNA(Sec): step 1/1. In terms of biological role, catalyzes the attachment of serine to tRNA(Ser). Is also able to aminoacylate tRNA(Sec) with serine, to form the misacylated tRNA L-seryl-tRNA(Sec), which will be further converted into selenocysteinyl-tRNA(Sec). This chain is Serine--tRNA ligase, found in Methanocorpusculum labreanum (strain ATCC 43576 / DSM 4855 / Z).